Reading from the N-terminus, the 861-residue chain is Integrator complex subunit 6-like (861 aa).

A VWFA domain is found at 3–227 (ILLFLIDTSA…QCLESLVQKV (225 aa)). Ser-617 is subject to Phosphoserine.

This Mus musculus (Mouse) protein is Integrator complex subunit 6-like (Ints6l).